We begin with the raw amino-acid sequence, 123 residues long: Putative iron-sulfur cluster insertion protein ErpA (123 aa).

Residues Cys51, Cys115, and Cys117 each coordinate iron-sulfur cluster.

The protein belongs to the HesB/IscA family. As to quaternary structure, homodimer. It depends on iron-sulfur cluster as a cofactor.

In terms of biological role, required for insertion of 4Fe-4S clusters. This chain is Putative iron-sulfur cluster insertion protein ErpA, found in Burkholderia lata (strain ATCC 17760 / DSM 23089 / LMG 22485 / NCIMB 9086 / R18194 / 383).